The chain runs to 179 residues: Cytochrome c-type biogenesis protein CcmE (179 aa).

Residues 1-8 (MTPRRKSR) lie on the Cytoplasmic side of the membrane. The helical; Signal-anchor for type II membrane protein transmembrane segment at 9–29 (MTVILFVLLGISIASALVLYA) threads the bilayer. Residues 30–179 (LRQNIDLFYT…QKTSMQEGQK (150 aa)) are Periplasmic-facing. Heme is bound by residues His-131 and Tyr-135. The segment at 151 to 179 (MGVADLKGESERDRQEKAYQKTSMQEGQK) is disordered. A compositionally biased stretch (basic and acidic residues) spans 156-169 (LKGESERDRQEKAY). The span at 170–179 (QKTSMQEGQK) shows a compositional bias: polar residues.

Belongs to the CcmE/CycJ family.

Its subcellular location is the cell inner membrane. In terms of biological role, heme chaperone required for the biogenesis of c-type cytochromes. Transiently binds heme delivered by CcmC and transfers the heme to apo-cytochromes in a process facilitated by CcmF and CcmH. The chain is Cytochrome c-type biogenesis protein CcmE from Pasteurella multocida (strain Pm70).